Reading from the N-terminus, the 427-residue chain is Glutamate-1-semialdehyde 2,1-aminomutase (427 aa).

N6-(pyridoxal phosphate)lysine is present on K265.

The protein belongs to the class-III pyridoxal-phosphate-dependent aminotransferase family. HemL subfamily. In terms of assembly, homodimer. Pyridoxal 5'-phosphate serves as cofactor.

It localises to the cytoplasm. The enzyme catalyses (S)-4-amino-5-oxopentanoate = 5-aminolevulinate. It functions in the pathway porphyrin-containing compound metabolism; protoporphyrin-IX biosynthesis; 5-aminolevulinate from L-glutamyl-tRNA(Glu): step 2/2. The protein is Glutamate-1-semialdehyde 2,1-aminomutase of Burkholderia cenocepacia (strain HI2424).